The sequence spans 61 residues: Small ribosomal subunit protein uS14 (61 aa).

Residues Cys-24, Cys-27, Cys-40, and Cys-43 each contribute to the Zn(2+) site.

This sequence belongs to the universal ribosomal protein uS14 family. Zinc-binding uS14 subfamily. In terms of assembly, part of the 30S ribosomal subunit. Contacts proteins S3 and S10. Zn(2+) serves as cofactor.

Binds 16S rRNA, required for the assembly of 30S particles and may also be responsible for determining the conformation of the 16S rRNA at the A site. The chain is Small ribosomal subunit protein uS14 from Acidothermus cellulolyticus (strain ATCC 43068 / DSM 8971 / 11B).